The following is a 118-amino-acid chain: MHFCHIVGWGLVLAVLYLRTEAKPVAQAHQKSLRALLGEELAEYLVSGERGERSIDPKTRARLLRDIRADTRSRAAWTRLLNEHPNSRKIKGINKKGTSKGCFGLKLDRIGAMSGLGC.

The first 22 residues, 1 to 22 (MHFCHIVGWGLVLAVLYLRTEA), serve as a signal peptide directing secretion. Positions 23–96 (KPVAQAHQKS…SRKIKGINKK (74 aa)) are excised as a propeptide. A disulfide bridge connects residues Cys-102 and Cys-118.

It belongs to the natriuretic peptide family.

It is found in the secreted. Its function is as follows. Exhibits natriuretic and vasodepressor activity. Has a cGMP-stimulating activity. This is C-type natriuretic peptide 2 from Aquarana catesbeiana (American bullfrog).